A 183-amino-acid chain; its full sequence is Protein SHI RELATED SEQUENCE 6 (183 aa).

6 residues coordinate Zn(2+): Cys41, Cys44, Cys52, Cys57, Cys61, and Cys68. Residues 41 to 68 constitute a DNA-binding region (zn(2)-C6 fungal-type; degenerate); the sequence is CRDCGNRAKKECLFERCRTCCKSRGYNC. Positions 79–88 are enriched in low complexity; that stretch reads SSATRSSSSP. Residues 79 to 121 form a disordered region; the sequence is SSATRSSSSPSERKKKLKIDKQSSPNVSLLPTTTSRQERGFRE. Residues 100–113 show a composition bias toward polar residues; it reads QSSPNVSLLPTTTS. Residues 157–160 carry the Required for homo- and heterodimerization motif; the sequence is ISGH.

It belongs to the SHI protein family.

The protein localises to the nucleus. In terms of biological role, transcription activator that binds DNA on 5'-ACTCTAC-3' and promotes auxin homeostasis-regulating gene expression (e.g. YUC genes), as well as genes affecting stamen development, cell expansion and timing of flowering. Synergistically with other SHI-related proteins, regulates gynoecium, stamen and leaf development in a dose-dependent manner, controlling apical-basal patterning. Promotes style and stigma formation, and influences vascular development during gynoecium development. May also have a role in the formation and/or maintenance of the shoot apical meristem (SAM). The chain is Protein SHI RELATED SEQUENCE 6 (SRS6) from Arabidopsis thaliana (Mouse-ear cress).